Consider the following 241-residue polypeptide: Uridylate kinase (241 aa).

Residues 10–13 (KLSG), G53, and R57 contribute to the ATP site. Residues D72 and 133–140 (AGSPYFST) each bind UMP. Residues N161, Y167, and D170 each contribute to the ATP site.

The protein belongs to the UMP kinase family. In terms of assembly, homohexamer.

The protein resides in the cytoplasm. It carries out the reaction UMP + ATP = UDP + ADP. Its pathway is pyrimidine metabolism; CTP biosynthesis via de novo pathway; UDP from UMP (UMPK route): step 1/1. Inhibited by UTP. Catalyzes the reversible phosphorylation of UMP to UDP. The polypeptide is Uridylate kinase (Onion yellows phytoplasma (strain OY-M)).